A 60-amino-acid chain; its full sequence is Large ribosomal subunit protein bL32 (60 aa).

Positions 1-44 (MAVQQNKKSRSARDMRRSHDALEASTLSVEKTTGEVHLRHHVSP) are disordered. Basic and acidic residues predominate over residues 11-22 (SARDMRRSHDAL).

It belongs to the bacterial ribosomal protein bL32 family.

The sequence is that of Large ribosomal subunit protein bL32 from Pseudomonas fluorescens (strain SBW25).